The primary structure comprises 172 residues: Myosin regulatory light polypeptide 9 (172 aa).

The span at 1–16 (MSSKRAKTKTTKKRPQ) shows a compositional bias: basic residues. The segment at 1–20 (MSSKRAKTKTTKKRPQRATS) is disordered. N-acetylserine is present on Ser-2. Thr-19 carries the phosphothreonine; by MLCK, CIT and ROCK2 modification. Ser-20 is modified (phosphoserine; by CDC42BP, CIT, MLCK, PAK1, ROCK1, ROCK2, DAPK1, DAPK2 and ZIPK/DAPK3). EF-hand domains are found at residues 29 to 64 (SQIQ…LGKN), 98 to 133 (DPED…MGDR), and 134 to 169 (FTDE…GAKD). The Ca(2+) site is built by Asp-42, Asn-44, Asp-46, and Asp-53.

In terms of assembly, myosin is a hexamer of 2 heavy chains and 4 light chains: interacts with myosin heavy chain MYO19. Interacts with LUZP1; the interaction results in inhibition of phosphorylation of MYL9 by DAPK3. Phosphorylation increases the actin-activated myosin ATPase activity and thereby regulates the contractile activity. It is required to generate the driving force in the migration of the cells but not necessary for localization of myosin-2 at the leading edge. Phosphorylation is required for myotube formation. Phosphorylated by DAPK3; DAPK3-mediated phosphorylation is inhibited by LUZP1.

The protein localises to the cytoplasm. The protein resides in the cytoskeleton. It is found in the cell cortex. Myosin regulatory subunit that plays an important role in regulation of both smooth muscle and nonmuscle cell contractile activity via its phosphorylation. Implicated in cytokinesis, receptor capping, and cell locomotion. In myoblasts, may regulate PIEZO1-dependent cortical actomyosin assembly involved in myotube formation. In Bos taurus (Bovine), this protein is Myosin regulatory light polypeptide 9 (MYL9).